A 209-amino-acid polypeptide reads, in one-letter code: FMN-dependent NADH:quinone oxidoreductase 2 (209 aa).

Residues Ser9, 15 to 17 (SVS), and 97 to 100 (MWNF) contribute to the FMN site.

This sequence belongs to the azoreductase type 1 family. As to quaternary structure, homodimer. FMN serves as cofactor.

It carries out the reaction 2 a quinone + NADH + H(+) = 2 a 1,4-benzosemiquinone + NAD(+). The enzyme catalyses N,N-dimethyl-1,4-phenylenediamine + anthranilate + 2 NAD(+) = 2-(4-dimethylaminophenyl)diazenylbenzoate + 2 NADH + 2 H(+). In terms of biological role, quinone reductase that provides resistance to thiol-specific stress caused by electrophilic quinones. Also exhibits azoreductase activity. Catalyzes the reductive cleavage of the azo bond in aromatic azo compounds to the corresponding amines. The protein is FMN-dependent NADH:quinone oxidoreductase 2 of Pseudomonas syringae pv. tomato (strain ATCC BAA-871 / DC3000).